The following is a 154-amino-acid chain: Large ribosomal subunit protein uL22c (154 aa).

This sequence belongs to the universal ribosomal protein uL22 family. In terms of assembly, part of the 50S ribosomal subunit.

Its subcellular location is the plastid. The protein localises to the chloroplast. In terms of biological role, this protein binds specifically to 23S rRNA. Its function is as follows. The globular domain of the protein is located near the polypeptide exit tunnel on the outside of the subunit, while an extended beta-hairpin is found that lines the wall of the exit tunnel in the center of the 70S ribosome. This chain is Large ribosomal subunit protein uL22c (rpl22), found in Helianthus annuus (Common sunflower).